Here is a 47-residue protein sequence, read N- to C-terminus: Large ribosomal subunit protein bL34 (47 aa).

The protein belongs to the bacterial ribosomal protein bL34 family.

The protein is Large ribosomal subunit protein bL34 of Corynebacterium glutamicum (strain R).